The primary structure comprises 137 residues: Large ribosomal subunit protein uL16c (137 aa).

Belongs to the universal ribosomal protein uL16 family. Part of the 50S ribosomal subunit.

The protein localises to the plastid. Its subcellular location is the chloroplast. In Adiantum capillus-veneris (Maidenhair fern), this protein is Large ribosomal subunit protein uL16c.